Consider the following 245-residue polypeptide: Orotidine 5'-phosphate decarboxylase (245 aa).

Residues D22, K44, 71-80 (DLKFHDIPNT), T131, R192, Q201, G221, and R222 contribute to the substrate site. K73 serves as the catalytic Proton donor.

The protein belongs to the OMP decarboxylase family. Type 1 subfamily. In terms of assembly, homodimer.

The catalysed reaction is orotidine 5'-phosphate + H(+) = UMP + CO2. The protein operates within pyrimidine metabolism; UMP biosynthesis via de novo pathway; UMP from orotate: step 2/2. In terms of biological role, catalyzes the decarboxylation of orotidine 5'-monophosphate (OMP) to uridine 5'-monophosphate (UMP). The protein is Orotidine 5'-phosphate decarboxylase of Salmonella typhimurium (strain LT2 / SGSC1412 / ATCC 700720).